Here is a 395-residue protein sequence, read N- to C-terminus: Putative carbonic anhydrase 1 (395 aa).

An N-terminal signal peptide occupies residues 1–24 (MKLQGAGCVVAAVLGALFIVNVES). In terms of domain architecture, Alpha-carbonic anhydrase spans 42–365 (ISYDVRSTIG…LNDRPVFLVR (324 aa)). Zn(2+)-binding residues include His-139, His-141, and His-165.

This sequence belongs to the alpha-carbonic anhydrase family. It depends on Zn(2+) as a cofactor. As to expression, component of the acid-insoluble and acid-soluble organic matrix of calcified layers of the shell (at protein level).

It localises to the secreted. It catalyses the reaction hydrogencarbonate + H(+) = CO2 + H2O. In terms of biological role, reversible hydration of carbon dioxide. The protein is Putative carbonic anhydrase 1 of Lottia gigantea (Giant owl limpet).